The primary structure comprises 1014 residues: Collagen alpha-1(I) chain (1014 aa).

The disordered stretch occupies residues 1-1014 (SYGYDEKGGI…PGPPGPPGPP (1014 aa)). Positions 9 to 22 (GISVPGPMGPSGPR) are enriched in low complexity. 11 positions are modified to 4-hydroxyproline: proline 25, proline 28, proline 30, proline 39, proline 42, proline 45, proline 60, proline 75, proline 81, proline 90, and proline 96. Residues 33–51 (QGFQGPPGEPGEPGSSGPM) are compositionally biased toward low complexity. Positions 63 to 77 (NGDDGEAGKPGRPGE) are enriched in basic and acidic residues. Residue lysine 99 is modified to 5-hydroxylysine; alternate. Lysine 99 carries O-linked (Gal...) hydroxylysine; alternate glycosylation. Phosphoserine is present on serine 105. Over residues 113-129 (DAGPAGPKGEPGSPGEN) the composition is skewed to low complexity. Residues proline 123, proline 126, proline 132, proline 141, proline 147, proline 168, proline 177, proline 180, proline 207, proline 210, proline 222, proline 228, proline 237, proline 243, proline 246, and proline 261 each carry the 4-hydroxyproline modification. Residues 147 to 165 (PGASGPAGARGNDGATGAA) are compositionally biased toward low complexity. A compositionally biased stretch (pro residues) spans 167 to 179 (PPGPTGPAGPPGF). The segment covering 213 to 252 (AGAAGPAGNPGADGQPGAKGANGAPGIAGAPGFPGARGPS) has biased composition (low complexity). Lysine 264 is subject to 5-hydroxylysine. 8 positions are modified to 4-hydroxyproline: proline 270, proline 273, proline 285, proline 294, proline 309, proline 315, proline 324, and proline 330. Residues 319–328 (GERGGPGSRG) are compositionally biased toward gly residues. Lysine 339 carries the 5-hydroxylysine modification. A 4-hydroxyproline mark is found at proline 348, proline 357, proline 363, proline 369, proline 378, proline 381, proline 390, proline 399, proline 405, proline 417, proline 426, proline 435, proline 438, proline 456, proline 473, proline 479, proline 485, proline 491, proline 497, proline 503, proline 515, proline 524, proline 535, proline 548, proline 554, and proline 563. A compositionally biased stretch (low complexity) spans 372–398 (KGLTGSPGSPGPDGKTGPPGPAGQDGR). Low complexity predominate over residues 407 to 426 (ARGQAGVMGFPGPKGAAGEP). The segment covering 485–494 (PGEAGKPGEQ) has biased composition (low complexity). Lysine 575 carries the 5-hydroxylysine modification. 4-hydroxyproline is present on residues proline 581, proline 596, and proline 602. Residues 608–622 (SGPSGPAGPTGARGA) show a composition bias toward low complexity. Serine 611 is subject to Phosphoserine. 4-hydroxyproline is present on residues proline 623, proline 629, proline 632, proline 641, proline 647, proline 674, and proline 683. The span at 635–665 (AGFAGPPGADGQPGAKGEPGDAGAKGDAGPS) shows a compositional bias: low complexity. At lysine 686 the chain carries 5-hydroxylysine. The span at 691–707 (SAGPPGATGFPGAAGRV) shows a compositional bias: low complexity. A 4-hydroxyproline mark is found at proline 695 and proline 701. Proline 709 carries the 3-hydroxyproline modification. A 4-hydroxyproline mark is found at proline 710, proline 719, proline 722, proline 743, proline 752, proline 760, proline 769, proline 787, proline 796, proline 799, proline 805, proline 820, proline 826, proline 832, proline 841, and proline 847. Low complexity predominate over residues 736–745 (ETGPAGRPGE). The span at 757–769 (KGSPGADGPAGAP) shows a compositional bias: low complexity. Over residues 819 to 829 (PPGPVGPPGLA) the composition is skewed to pro residues. 5-hydroxylysine is present on lysine 856. Positions 864–879 (PGPPGAPGAPGAPGPV) are enriched in pro residues. 3 positions are modified to 4-hydroxyproline: proline 867, proline 870, and proline 873. Residues 900-914 (AGPAGARGPAGPQGP) are compositionally biased toward low complexity. Over residues 915–929 (RGDKGETGEQGDRGI) the composition is skewed to basic and acidic residues. Lysine 918 is modified (5-hydroxylysine). The residue at position 930 (lysine 930) is a 5-hydroxylysine; alternate. O-linked (Gal...) hydroxylysine; alternate glycosylation occurs at lysine 930. 4-hydroxyproline is present on residues proline 945, proline 948, proline 966, and proline 981. Residues 948-981 (PGEQGPSGASGPAGPRGPPGSAGSPGKDGLNGLP) show a composition bias toward low complexity. Proline 986 carries the post-translational modification 3-hydroxyproline. 4-hydroxyproline is present on proline 987. The span at 999–1014 (VGPPGPPGPPGPPGPP) shows a compositional bias: pro residues. Proline 1001 is modified (3-hydroxyproline). Proline 1002 bears the 4-hydroxyproline mark. The residue at position 1004 (proline 1004) is a 3-hydroxyproline. At proline 1005 the chain carries 4-hydroxyproline. The residue at position 1007 (proline 1007) is a 3-hydroxyproline. 4-hydroxyproline occurs at positions 1008, 1011, and 1014.

It belongs to the fibrillar collagen family. In terms of assembly, trimers of one alpha 2(I) and two alpha 1(I) chains. Post-translationally, contains mostly 4-hydroxyproline. Proline residues at the third position of the tripeptide repeating unit (G-X-Y) are hydroxylated in some or all of the chains. Contains 3-hydroxyproline at a few sites. This modification occurs on the first proline residue in the sequence motif Gly-Pro-Hyp, where Hyp is 4-hydroxyproline. In terms of processing, lysine residues at the third position of the tripeptide repeating unit (G-X-Y) are 5-hydroxylated in some or all of the chains. Post-translationally, O-glycosylated on hydroxylated lysine residues. The O-linked glycan consists of a Glc-Gal disaccharide. In terms of tissue distribution, expressed in bones.

It localises to the secreted. The protein localises to the extracellular space. It is found in the extracellular matrix. Its function is as follows. Type I collagen is a member of group I collagen (fibrillar forming collagen). In Megatherium americanum (Giant ground sloth), this protein is Collagen alpha-1(I) chain.